A 438-amino-acid chain; its full sequence is Sphingomyelinase phosphodiesterase D (438 aa).

The first 17 residues, 1–17, serve as a signal peptide directing secretion; that stretch reads MKIILILVLVLVVSINA. D27 and H29 together coordinate Zn(2+). N-linked (GlcNAc...) asparagine glycosylation occurs at N40. Zn(2+) is bound by residues D111 and N148. N-linked (GlcNAc...) asparagine glycosylation occurs at N160. H247 serves as a coordination point for Zn(2+). N271 carries an N-linked (GlcNAc...) asparagine glycan. 2 residues coordinate Zn(2+): H287 and H289. 2 N-linked (GlcNAc...) asparagine glycosylation sites follow: N338 and N359.

The protein belongs to the acid sphingomyelinase family. Requires Zn(2+) as cofactor.

Its subcellular location is the secreted. The polypeptide is Sphingomyelinase phosphodiesterase D (sgmD) (Dictyostelium discoideum (Social amoeba)).